Consider the following 745-residue polypeptide: Fatty acid oxidation complex subunit alpha (745 aa).

An enoyl-CoA hydratase region spans residues 47–209 (VNTLKAKFAE…KMGLVDDVVP (163 aa)). The tract at residues 325–745 (RAIHRVGVLG…LDEAAITAHN (421 aa)) is 3-hydroxyacyl-CoA dehydrogenase.

It in the N-terminal section; belongs to the enoyl-CoA hydratase/isomerase family. In the central section; belongs to the 3-hydroxyacyl-CoA dehydrogenase family. In terms of assembly, heterotetramer of two alpha chains (FadJ) and two beta chains (FadI).

The protein localises to the cytoplasm. The enzyme catalyses a (3S)-3-hydroxyacyl-CoA = a (2E)-enoyl-CoA + H2O. The catalysed reaction is a 4-saturated-(3S)-3-hydroxyacyl-CoA = a (3E)-enoyl-CoA + H2O. It catalyses the reaction a (3S)-3-hydroxyacyl-CoA + NAD(+) = a 3-oxoacyl-CoA + NADH + H(+). It carries out the reaction (3S)-3-hydroxybutanoyl-CoA = (3R)-3-hydroxybutanoyl-CoA. The protein operates within lipid metabolism; fatty acid beta-oxidation. In terms of biological role, catalyzes the formation of a hydroxyacyl-CoA by addition of water on enoyl-CoA. Also exhibits 3-hydroxyacyl-CoA epimerase and 3-hydroxyacyl-CoA dehydrogenase activities. The polypeptide is Fatty acid oxidation complex subunit alpha (Yersinia enterocolitica serotype O:8 / biotype 1B (strain NCTC 13174 / 8081)).